The sequence spans 221 residues: Germin-like protein subfamily 1 member 17 (221 aa).

Positions 1 to 21 (MKVSMSLILITLSALVTIAKA) are cleaved as a signal peptide. A disulfide bridge connects residues C31 and C48. The Cupin type-1 domain maps to 76-213 (SNVTTVNVDQ…AFQLDVNVVK (138 aa)). N-linked (GlcNAc...) asparagine glycosylation is present at N77. H110, H112, E117, and H159 together coordinate Mn(2+).

The protein belongs to the germin family. Oligomer (believed to be a pentamer but probably hexamer).

The protein localises to the secreted. It localises to the extracellular space. It is found in the apoplast. In terms of biological role, may play a role in plant defense. Probably has no oxalate oxidase activity even if the active site is conserved. The sequence is that of Germin-like protein subfamily 1 member 17 from Arabidopsis thaliana (Mouse-ear cress).